A 381-amino-acid chain; its full sequence is Queuine tRNA-ribosyltransferase (381 aa).

Catalysis depends on Asp90, which acts as the Proton acceptor. Substrate is bound by residues 90 to 94 (DSGGF), Asp144, Gln193, and Gly221. The interval 252 to 258 (GVGTPEN) is RNA binding. The active-site Nucleophile is the Asp271. The segment at 276 to 280 (TRNAR) is RNA binding; important for wobble base 34 recognition. Positions 309, 311, 314, and 340 each coordinate Zn(2+).

It belongs to the queuine tRNA-ribosyltransferase family. In terms of assembly, homodimer. Within each dimer, one monomer is responsible for RNA recognition and catalysis, while the other monomer binds to the replacement base PreQ1. It depends on Zn(2+) as a cofactor.

The enzyme catalyses 7-aminomethyl-7-carbaguanine + guanosine(34) in tRNA = 7-aminomethyl-7-carbaguanosine(34) in tRNA + guanine. Its pathway is tRNA modification; tRNA-queuosine biosynthesis. Functionally, catalyzes the base-exchange of a guanine (G) residue with the queuine precursor 7-aminomethyl-7-deazaguanine (PreQ1) at position 34 (anticodon wobble position) in tRNAs with GU(N) anticodons (tRNA-Asp, -Asn, -His and -Tyr). Catalysis occurs through a double-displacement mechanism. The nucleophile active site attacks the C1' of nucleotide 34 to detach the guanine base from the RNA, forming a covalent enzyme-RNA intermediate. The proton acceptor active site deprotonates the incoming PreQ1, allowing a nucleophilic attack on the C1' of the ribose to form the product. After dissociation, two additional enzymatic reactions on the tRNA convert PreQ1 to queuine (Q), resulting in the hypermodified nucleoside queuosine (7-(((4,5-cis-dihydroxy-2-cyclopenten-1-yl)amino)methyl)-7-deazaguanosine). The chain is Queuine tRNA-ribosyltransferase from Helicobacter hepaticus (strain ATCC 51449 / 3B1).